The primary structure comprises 782 residues: MKISSGAINFSTIPNQVKKLITSIREHTKNGLTSKITSVKNTHTSLNEKFKTGKDSPIEFALPQKIKDFFQPKDKNTLNKTLITVKNIKDTNNAGKKNISAEDVSKMNAAFMRKHIANQTCDYNYRMTGAAPLPGGVSVSANNRPTVSEGRTPPVSPSLSLQATSSPSSPADWAKKLTDAVLRQKAGETLTAADRDFSNADFRNITFSKILPPSFMERDGDIIKGFNFSNSKFTYSDISHLHFDECRFTYSTLSDVVCSNTKFSNSDMNEVFLQYSITTQQQPSFIDTTLKNTLIRHKANLSGVILNEPDNSSPPSVSGGGNFIRLGDIWLQMPLLWTENAVDGFLNHEHNNGKSILMTIDSLPDKYSQEKVQAMEDLVKSLRGGRLTEACIRPVESSLVSVLAHPPYTQSALISEWLGPVQERFFAHQCQTYNDVPLPAPDTYYQQRILPVLLDSFDRNSAAMTTHSGLFNQVILHCMTGVDCTDGTRQKAAALYEQYLAHPAVSPHIHNGLFGNYDGSPDWTTRAADNFLLLSSQDSDTAMMLSTDTLLTMLNPTPDTAWDNFYLLRAGENVSTAQISPVELFRHDFPVFLAAFNQQATQRRFGELIDIILSTEEHGELNQQFLAATNQKHSTVKLIDDASVSRLATIFDPLLPEGKLSPAHYQHILSAYHLTDATPQKQAETLFCLSTAFARYSSSAIFGTEHDSPPALRGYAEALMQKAWELSPAIFPSSEQFTEWSDRFHGLHGAFTCTSVVADSMQRHARKYFPSVLSSILPLAWA.

The disordered stretch occupies residues 137–171 (VSVSANNRPTVSEGRTPPVSPSLSLQATSSPSSPA). The segment covering 157 to 171 (PSLSLQATSSPSSPA) has biased composition (low complexity). The active-site Glycyl thioester intermediate is C753.

It belongs to the SopA E3 ligase family. Ubiquitinated in the presence of host E1 ubiquitin-activating enzyme, E2 ubiquitin-conjugating enzyme and ubiquitin.

The protein localises to the secreted. It is found in the host cell. It carries out the reaction S-ubiquitinyl-[E2 ubiquitin-conjugating enzyme]-L-cysteine + [acceptor protein]-L-lysine = [E2 ubiquitin-conjugating enzyme]-L-cysteine + N(6)-ubiquitinyl-[acceptor protein]-L-lysine.. Functionally, effector proteins function to alter host cell physiology and promote bacterial survival in host tissues. This protein is an E3 ubiquitin ligase that interferes with host's ubiquitination pathway. For instance, prevents host innate immune response by ubiquitinating and thus sending to degradation host E3 ubiquitin ligases TRIM56 and TRIM65. The sequence is that of E3 ubiquitin-protein ligase SopA (sopA) from Salmonella typhimurium (strain 14028s / SGSC 2262).